Reading from the N-terminus, the 502-residue chain is Maturase K (502 aa).

Belongs to the intron maturase 2 family. MatK subfamily.

The protein resides in the plastid. Its subcellular location is the chloroplast. Its function is as follows. Usually encoded in the trnK tRNA gene intron. Probably assists in splicing its own and other chloroplast group II introns. The protein is Maturase K of Ehretia anacua (Sandpaper tree).